Consider the following 401-residue polypeptide: MTRHAAPILTTLLDTDAYKLHMQQAVFHRYYDVTVTAEFRCRGEDMLGIYADELVQQIANMASLTLTDNEFAYLSSLPFFKTDYLNWLRTFRYNPEQVTVQNLQGKLDIRISGPWREVILWEVPLLALISEVVHRHRSPQITPEQAVSRLKSKLEQFKRLTCDLDMSRFRLMDFGTRRRFSHDVQLAVVSTLKQDFPWLVGSSNYDIARRLNIAPVGTQAHEWFQAHQQISPTLENCQRAALQAWLDEYPDRLGIALTDCITTDAFLRDFGSEFAHAYQGLRHDSGDPFEWGEKAIAHYQQLNIDPLSKTLVFSDNLDLDKAVGLYRHFEQRINVIFGIGTRLSCDIPQVKPLNIVIKLVECNGKPVAKLSDSPGKTICHDKAFVRALRKAFDLPRVKKAS.

Histidine 221 carries the phosphohistidine; by autocatalysis modification.

This sequence belongs to the NAPRTase family. In terms of processing, transiently phosphorylated on a His residue during the reaction cycle. Phosphorylation strongly increases the affinity for substrates and increases the rate of nicotinate D-ribonucleotide production. Dephosphorylation regenerates the low-affinity form of the enzyme, leading to product release.

It carries out the reaction nicotinate + 5-phospho-alpha-D-ribose 1-diphosphate + ATP + H2O = nicotinate beta-D-ribonucleotide + ADP + phosphate + diphosphate. The protein operates within cofactor biosynthesis; NAD(+) biosynthesis; nicotinate D-ribonucleotide from nicotinate: step 1/1. Catalyzes the synthesis of beta-nicotinate D-ribonucleotide from nicotinate and 5-phospho-D-ribose 1-phosphate at the expense of ATP. This Erwinia tasmaniensis (strain DSM 17950 / CFBP 7177 / CIP 109463 / NCPPB 4357 / Et1/99) protein is Nicotinate phosphoribosyltransferase.